Consider the following 459-residue polypeptide: Elongation factor 1-alpha 1 (459 aa).

The 238-residue stretch at 5–242 folds into the tr-type G domain; that stretch reads KTHINIVVIG…DCIIPPQRPT (238 aa). Residues 14-21 are G1; it reads GHVDSGKS. Residues 70–74 are G2; the sequence is GITID. The interval 91-94 is G3; sequence DAPG. The tract at residues 153–156 is G4; that stretch reads NKMD. Positions 194 to 196 are G5; sequence SGF. 5-glutamyl glycerylphosphorylethanolamine is present on residues Glu301 and Glu374.

The protein belongs to the TRAFAC class translation factor GTPase superfamily. Classic translation factor GTPase family. EF-Tu/EF-1A subfamily.

Its subcellular location is the cytoplasm. Functionally, this protein promotes the GTP-dependent binding of aminoacyl-tRNA to the A-site of ribosomes during protein biosynthesis. This is Elongation factor 1-alpha 1 (eft-1) from Oscheius tipulae.